We begin with the raw amino-acid sequence, 507 residues long: ATP synthase subunit alpha, chloroplastic (507 aa).

G170–T177 contributes to the ATP binding site.

It belongs to the ATPase alpha/beta chains family. F-type ATPases have 2 components, CF(1) - the catalytic core - and CF(0) - the membrane proton channel. CF(1) has five subunits: alpha(3), beta(3), gamma(1), delta(1), epsilon(1). CF(0) has four main subunits: a, b, b' and c.

The protein resides in the plastid. It is found in the chloroplast thylakoid membrane. It carries out the reaction ATP + H2O + 4 H(+)(in) = ADP + phosphate + 5 H(+)(out). Its function is as follows. Produces ATP from ADP in the presence of a proton gradient across the membrane. The alpha chain is a regulatory subunit. The sequence is that of ATP synthase subunit alpha, chloroplastic from Nymphaea alba (White water-lily).